The primary structure comprises 447 residues: C4-dicarboxylate transport protein (447 aa).

The next 8 membrane-spanning stretches (helical) occupy residues 19–39 (ILYV…HFYP), 55–75 (LVKM…IAGL), 90–110 (IYFL…ANVV), 155–175 (AFAS…GIAL), 199–219 (LVAI…AFTI), 232–252 (MLVG…LGLV), 343–363 (LLLV…AGFI), and 366–386 (AATL…ILGV).

This sequence belongs to the dicarboxylate/amino acid:cation symporter (DAACS) (TC 2.A.23) family.

The protein localises to the cell inner membrane. Its function is as follows. Responsible for the transport of dicarboxylates such as succinate, fumarate, and malate from the periplasm across the membrane. This is C4-dicarboxylate transport protein from Rhodospirillum rubrum (strain ATCC 11170 / ATH 1.1.1 / DSM 467 / LMG 4362 / NCIMB 8255 / S1).